The sequence spans 489 residues: Hyaluronoglucuronidase (489 aa).

E176 (proton donor) is an active-site residue. The active-site Nucleophile is E290.

The protein belongs to the glycosyl hydrolase 79 family.

It catalyses the reaction Random hydrolysis of (1-&gt;3)-linkages between beta-D-glucuronate and N-acetyl-D-glucosamine residues in hyaluronate.. Its activity is regulated as follows. Hyaluronidase activity is inhibited by Mn(2+), Cu(2+) and Fe(3+). In terms of biological role, hyaluronidase that mediates hydrolysis of (1-&gt;3)-linkages between beta-D-glucuronate and N-acetyl-D-glucosamine residues in hyaluronate. Very specific to hyaluronate: not able to hydrolyze chitin, heparin or chondroitin sulfate. The polypeptide is Hyaluronoglucuronidase (Hirudo nipponia (Korean blood-sucking leech)).